Reading from the N-terminus, the 279-residue chain is Membrane protein insertase YidC (279 aa).

Residues 1-22 form the signal peptide; the sequence is MKHLKRNMALLSVAALSFILTA. Residue Cys-23 is the site of N-palmitoyl cysteine attachment. Cys-23 is lipidated: S-diacylglycerol cysteine. 5 helical membrane-spanning segments follow: residues 35 to 55, 59 to 79, 129 to 149, 170 to 190, and 210 to 230; these read IWDG…SKLF, YGWG…PLMI, MAGC…YAAV, PYFI…WLSM, and PLVI…YWVV. The segment covering 253–268 has biased composition (basic and acidic residues); that stretch reads EEKIQTEKAKRKAIEK. A disordered region spans residues 253–279; that stretch reads EEKIQTEKAKRKAIEKAKRRAMKSKRK. Residues 269–279 show a composition bias toward basic residues; that stretch reads AKRRAMKSKRK.

The protein belongs to the OXA1/ALB3/YidC family. Type 2 subfamily.

It localises to the cell membrane. Required for the insertion and/or proper folding and/or complex formation of integral membrane proteins into the membrane. Involved in integration of membrane proteins that insert both dependently and independently of the Sec translocase complex, as well as at least some lipoproteins. The polypeptide is Membrane protein insertase YidC (Pediococcus pentosaceus (strain ATCC 25745 / CCUG 21536 / LMG 10740 / 183-1w)).